A 1906-amino-acid chain; its full sequence is Serine protease/ABC transporter B family protein tagB (1906 aa).

Residues 1-31 form the signal peptide; it reads MKFQFSSPSKIFLFSSVILILIFIGIKFELL. The tract at residues 96 to 134 is disordered; sequence INNNNNNNNKLNNNNNNNNNNNNNNNNNNNNNNNNNNNN. Residues 356-763 enclose the Peptidase S8 domain; that stretch reads PTVIFGTKDK…ASSTNPSNAI (408 aa). Catalysis depends on charge relay system residues aspartate 387 and histidine 432. N-linked (GlcNAc...) asparagine glycosylation is found at asparagine 594, asparagine 621, and asparagine 672. Serine 695 serves as the catalytic Charge relay system. N-linked (GlcNAc...) asparagine glycosylation is found at asparagine 747 and asparagine 823. 3 helical membrane-spanning segments follow: residues 1011-1031, 1076-1096, and 1121-1141; these read YIIIIVAGGTMVLIILLLMWI, FIIELTIATACSLVATAASIL, and FIIIFILAFIEFLFTNVGSWI. In terms of domain architecture, ABC transmembrane type-1 spans 1080 to 1363; the sequence is LTIATACSLV…LFGVYVSYIQ (284 aa). N-linked (GlcNAc...) asparagine glycosylation is present at asparagine 1172. Transmembrane regions (helical) follow at residues 1210-1230, 1309-1329, and 1332-1352; these read LVFIFTISWKLSLAFFAAVPI, WLLIESLTFVILYFSAYLVIQ, and FTVGLMISFSLYIGYVVDASS. The disordered stretch occupies residues 1385–1455; sequence LEEEEADRLA…NNNNNIGNLD (71 aa). The segment covering 1396-1405 has biased composition (gly residues); the sequence is LSGGGGGGGD. The span at 1407–1420 shows a compositional bias: basic and acidic residues; that stretch reads GDDKKDKQNIENGK. One can recognise an ABC transporter domain in the interval 1518 to 1756; the sequence is IEFKNVSFRY…KGKYYRMFSE (239 aa). N-linked (GlcNAc...) asparagine glycosylation is present at asparagine 1522. An ATP-binding site is contributed by 1553 to 1560; it reads GPSGSGKS. The N-linked (GlcNAc...) asparagine glycan is linked to asparagine 1658. The disordered stretch occupies residues 1757–1906; sequence DKDDTPLQNN…QMDEENDEER (150 aa). Composition is skewed to low complexity over residues 1765 to 1779 and 1814 to 1871; these read NNNNNKNNNNNNNNN and EQQE…DYDQ. Residues 1872 to 1886 show a composition bias toward pro residues; the sequence is VPPPPPLPSESPSPP.

It in the C-terminal section; belongs to the ABC transporter superfamily. ABCB family. Multidrug resistance exporter (TC 3.A.1.201) subfamily. In the N-terminal section; belongs to the peptidase S8 family.

Its subcellular location is the membrane. Functionally, intercellular communication via tagB may mediate integration of cellular differentiation with morphogenesis. This is Serine protease/ABC transporter B family protein tagB (tagB) from Dictyostelium discoideum (Social amoeba).